The sequence spans 274 residues: D-aminoacyl-tRNA deacylase (274 aa).

This sequence belongs to the DtdA deacylase family. In terms of assembly, monomer. Zn(2+) serves as cofactor.

The catalysed reaction is a D-aminoacyl-tRNA + H2O = a tRNA + a D-alpha-amino acid + H(+). It catalyses the reaction glycyl-tRNA(Ala) + H2O = tRNA(Ala) + glycine + H(+). In terms of biological role, D-aminoacyl-tRNA deacylase with broad substrate specificity. By recycling D-aminoacyl-tRNA to D-amino acids and free tRNA molecules, this enzyme counteracts the toxicity associated with the formation of D-aminoacyl-tRNA entities in vivo. This chain is D-aminoacyl-tRNA deacylase, found in Pyrococcus horikoshii (strain ATCC 700860 / DSM 12428 / JCM 9974 / NBRC 100139 / OT-3).